The primary structure comprises 349 residues: DNA replication and repair protein RecF (349 aa).

An ATP-binding site is contributed by 30–37 (GKNGSGKT).

This sequence belongs to the RecF family.

It is found in the cytoplasm. In terms of biological role, the RecF protein is involved in DNA metabolism; it is required for DNA replication and normal SOS inducibility. RecF binds preferentially to single-stranded, linear DNA. It also seems to bind ATP. The sequence is that of DNA replication and repair protein RecF from Francisella tularensis subsp. novicida (strain U112).